A 264-amino-acid chain; its full sequence is Hydroxyethylthiazole kinase (264 aa).

M45 lines the substrate pocket. ATP is bound by residues R121 and S167. Residue G194 coordinates substrate.

The protein belongs to the Thz kinase family. It depends on Mg(2+) as a cofactor.

The enzyme catalyses 5-(2-hydroxyethyl)-4-methylthiazole + ATP = 4-methyl-5-(2-phosphooxyethyl)-thiazole + ADP + H(+). Its pathway is cofactor biosynthesis; thiamine diphosphate biosynthesis; 4-methyl-5-(2-phosphoethyl)-thiazole from 5-(2-hydroxyethyl)-4-methylthiazole: step 1/1. Functionally, catalyzes the phosphorylation of the hydroxyl group of 4-methyl-5-beta-hydroxyethylthiazole (THZ). This is Hydroxyethylthiazole kinase from Aliivibrio salmonicida (strain LFI1238) (Vibrio salmonicida (strain LFI1238)).